The chain runs to 266 residues: Glucosamine-6-phosphate deaminase (266 aa).

Residue Asp72 is the Proton acceptor; for enolization step of the active site. Residue Asp141 is the For ring-opening step of the active site. Residue His143 is the Proton acceptor; for ring-opening step of the active site. The active-site For ring-opening step is Glu148.

It belongs to the glucosamine/galactosamine-6-phosphate isomerase family. NagB subfamily. As to quaternary structure, homohexamer.

It carries out the reaction alpha-D-glucosamine 6-phosphate + H2O = beta-D-fructose 6-phosphate + NH4(+). It participates in amino-sugar metabolism; N-acetylneuraminate degradation; D-fructose 6-phosphate from N-acetylneuraminate: step 5/5. With respect to regulation, allosterically activated by N-acetylglucosamine 6-phosphate (GlcNAc6P). Functionally, catalyzes the reversible isomerization-deamination of glucosamine 6-phosphate (GlcN6P) to form fructose 6-phosphate (Fru6P) and ammonium ion. The polypeptide is Glucosamine-6-phosphate deaminase (Erwinia tasmaniensis (strain DSM 17950 / CFBP 7177 / CIP 109463 / NCPPB 4357 / Et1/99)).